A 157-amino-acid chain; its full sequence is 2-C-methyl-D-erythritol 2,4-cyclodiphosphate synthase (157 aa).

Residues D9 and H11 each contribute to the a divalent metal cation site. 4-CDP-2-C-methyl-D-erythritol 2-phosphate contacts are provided by residues 9 to 11 (DVH) and 35 to 36 (HS). H43 contributes to the a divalent metal cation binding site. 4-CDP-2-C-methyl-D-erythritol 2-phosphate contacts are provided by residues 57–59 (DIG), 62–66 (FPDTD), 101–107 (AEKPKMA), 133–136 (TTTE), F140, and R143.

The protein belongs to the IspF family. Homotrimer. A divalent metal cation serves as cofactor.

It catalyses the reaction 4-CDP-2-C-methyl-D-erythritol 2-phosphate = 2-C-methyl-D-erythritol 2,4-cyclic diphosphate + CMP. The protein operates within isoprenoid biosynthesis; isopentenyl diphosphate biosynthesis via DXP pathway; isopentenyl diphosphate from 1-deoxy-D-xylulose 5-phosphate: step 4/6. Functionally, involved in the biosynthesis of isopentenyl diphosphate (IPP) and dimethylallyl diphosphate (DMAPP), two major building blocks of isoprenoid compounds. Catalyzes the conversion of 4-diphosphocytidyl-2-C-methyl-D-erythritol 2-phosphate (CDP-ME2P) to 2-C-methyl-D-erythritol 2,4-cyclodiphosphate (ME-CPP) with a corresponding release of cytidine 5-monophosphate (CMP). This chain is 2-C-methyl-D-erythritol 2,4-cyclodiphosphate synthase, found in Listeria innocua serovar 6a (strain ATCC BAA-680 / CLIP 11262).